A 214-amino-acid chain; its full sequence is Protein PsaE (214 aa).

An N-terminal signal peptide occupies residues 1-24; it reads MSHCVVLNKLESVLIIGDSRYALS. A DNA-binding region (ompR/PhoB-type) is located at residues 1 to 94; the sequence is MSHCVVLNKL…YKNEGYSYQK (94 aa).

Required for expression of pH 6 antigen. The protein is Protein PsaE (psaE) of Yersinia pseudotuberculosis serotype I (strain IP32953).